The following is a 359-amino-acid chain: E3 ubiquitin-protein ligase RNF146 (359 aa).

The RING-type zinc finger occupies 37 to 75; it reads CAICLQTCVHPVSLPCKHVFCYLCVKGASWLGKRCALCR. Glycyl lysine isopeptide (Lys-Gly) (interchain with G-Cter in ubiquitin) cross-links involve residues K85 and K95. Positions 92 to 168 constitute a WWE domain; it reads EELKAASRGN…EHGRRRKIKR (77 aa). 3 residues coordinate a glycoprotein: Y108, R111, and W115. K131 participates in a covalent cross-link: Glycyl lysine isopeptide (Lys-Gly) (interchain with G-Cter in ubiquitin). Residues Y145, Q154, R164, and K176 each contribute to the a glycoprotein site. K176 participates in a covalent cross-link: Glycyl lysine isopeptide (Lys-Gly) (interchain with G-Cter in ubiquitin). The disordered stretch occupies residues 254 to 359; that stretch reads GDNTAERSHR…PDGQCTVTEV (106 aa). The segment covering 284 to 298 has biased composition (acidic residues); the sequence is SIEETESDASSDSED. S290 and S294 each carry phosphoserine. The span at 306 to 323 shows a compositional bias: polar residues; sequence HSLTQQRLLVSNANQTVP.

As to quaternary structure, can form homooligomers. Interacts with PARsylated AXIN1, AXIN2, BLZF1, CASC3, H1-2, IPO7, LIG3, NCL, PARP1, XRCC1, XRCC5 and XRCC6. Interacts with DDB1, DHX15, IQGAP1, LRPPRC, PARP2, PRKDC, RUVBL2, TNKS1 and TNKS2. Binding often leads to interactor ubiquitination, in the presence of the appropriate E1 and E2 enzymes, and proteasomal degradation. Ubiquitinated; autoubiquitinated. Polyubiquitinated in the presence of UBE2D1, UBE2D2 and UBE2D3. Multimonoubiquitinated in the presence of UBE2E1. Not ubiquitinated in the presence of UBE2H, CDC34, UBE2L3, UBE2L6, nor UBE2C. In the absence of PAR, autoubiquitination occurs on Lys-85, Lys-95 and Lys-176 via 'Lys-11' and 'Lys-48' ubiquitin linkages. In the presence of PAR, Lys-131 and Lys-176 are ubiquitinated via 'Lys-6', 'Lys-33' and 'Lys-48' ubiquitin linkages. Autoubiquitination is enhanced upon PAR-binding. In terms of tissue distribution, ubiquitously expressed. Up-regulated in brains from patients with Alzheimer disease.

It localises to the cytoplasm. Its subcellular location is the cytosol. The protein resides in the nucleus. The enzyme catalyses S-ubiquitinyl-[E2 ubiquitin-conjugating enzyme]-L-cysteine + [acceptor protein]-L-lysine = [E2 ubiquitin-conjugating enzyme]-L-cysteine + N(6)-ubiquitinyl-[acceptor protein]-L-lysine.. It functions in the pathway protein modification; protein ubiquitination. In terms of biological role, E3 ubiquitin-protein ligase that specifically binds poly-ADP-ribosylated (PARsylated) proteins and mediates their ubiquitination and subsequent degradation. May regulate many important biological processes, such as cell survival and DNA damage response. Acts as an activator of the Wnt signaling pathway by mediating the ubiquitination of PARsylated AXIN1 and AXIN2, 2 key components of the beta-catenin destruction complex. Acts in cooperation with tankyrase proteins (TNKS and TNKS2), which mediate PARsylation of target proteins AXIN1, AXIN2, BLZF1, CASC3, TNKS and TNKS2. Recognizes and binds tankyrase-dependent PARsylated proteins via its WWE domain and mediates their ubiquitination, leading to their degradation. Different ubiquitin linkage types have been observed: TNKS2 undergoes ubiquitination at 'Lys-48' and 'Lys-63', while AXIN1 is only ubiquitinated at 'Lys-48'. May regulate TNKS and TNKS2 subcellular location, preventing aggregation at a centrosomal location. Neuroprotective protein. Protects the brain against N-methyl-D-aspartate (NMDA) receptor-mediated glutamate excitotoxicity and ischemia, by interfering with PAR-induced cell death, called parthanatos. Prevents nuclear translocation of AIFM1 in a PAR-binding dependent manner. Does not affect PARP1 activation. Protects against cell death induced by DNA damaging agents, such as N-methyl-N-nitro-N-nitrosoguanidine (MNNG) and rescues cells from G1 arrest. Promotes cell survival after gamma-irradiation. Facilitates DNA repair. This chain is E3 ubiquitin-protein ligase RNF146 (RNF146), found in Homo sapiens (Human).